The chain runs to 169 residues: Ferric-chelate reductase (NAD(P)H) (169 aa).

Tyrosine 7 contacts NADP(+). FMN contacts are provided by residues 27–31, 45–52, 82–84, and lysine 89; these read QIANT, CLNKENDT, and RKS. Residues histidine 126 and 147 to 154 contribute to the NADP(+) site; that span reads YADYHLMK.

Belongs to the non-flavoprotein flavin reductase family. Homodimer. FMN serves as cofactor. It depends on FAD as a cofactor.

The enzyme catalyses 2 a Fe(II)-siderophore + NAD(+) + H(+) = 2 a Fe(III)-siderophore + NADH. It carries out the reaction 2 a Fe(II)-siderophore + NADP(+) + H(+) = 2 a Fe(III)-siderophore + NADPH. In terms of biological role, catalyzes the reduction of bound ferric iron (Fe(3+)) in a variety of iron chelators (siderophores) using NAD(P)H as the electron donor, resulting in the release of Fe(2+). Not active with uncomplexed Fe(3+). Also reduces FMN and FAD, but not riboflavin. In Archaeoglobus fulgidus (strain ATCC 49558 / DSM 4304 / JCM 9628 / NBRC 100126 / VC-16), this protein is Ferric-chelate reductase (NAD(P)H).